Consider the following 341-residue polypeptide: Serpentine receptor class alpha-28 (341 aa).

A run of 7 helical transmembrane segments spans residues 25 to 45 (FIIS…RVLL), 57 to 77 (LLFS…VIRL), 107 to 129 (YYYT…LFSF), 142 to 162 (ASIV…YWVF), 188 to 208 (VNNI…FLYI), 242 to 262 (IVIF…SVFI), and 275 to 295 (LIIS…LIIL).

It belongs to the nematode receptor-like protein sra family.

Its subcellular location is the membrane. The protein is Serpentine receptor class alpha-28 (sra-28) of Caenorhabditis elegans.